A 475-amino-acid chain; its full sequence is ATP synthase subunit beta, chloroplastic (475 aa).

156–163 is an ATP binding site; it reads GGAGVGKT.

The protein belongs to the ATPase alpha/beta chains family. In terms of assembly, F-type ATPases have 2 components, CF(1) - the catalytic core - and CF(0) - the membrane proton channel. CF(1) has five subunits: alpha(3), beta(3), gamma(1), delta(1), epsilon(1). CF(0) has four main subunits: a(1), b(1), b'(1) and c(9-12).

It localises to the plastid. The protein localises to the chloroplast thylakoid membrane. It carries out the reaction ATP + H2O + 4 H(+)(in) = ADP + phosphate + 5 H(+)(out). Produces ATP from ADP in the presence of a proton gradient across the membrane. The catalytic sites are hosted primarily by the beta subunits. The sequence is that of ATP synthase subunit beta, chloroplastic from Trieres chinensis (Marine centric diatom).